Here is a 311-residue protein sequence, read N- to C-terminus: Ribosomal RNA small subunit methyltransferase H (311 aa).

Residues 32-34, aspartate 52, phenylalanine 79, aspartate 100, and glutamine 107 contribute to the S-adenosyl-L-methionine site; that span reads AGH. The segment covering 289–298 has biased composition (basic and acidic residues); sequence SKEELEENNR. The segment at 289-311 is disordered; the sequence is SKEELEENNRARSAKLRIAEKRK. Over residues 300-311 the composition is skewed to basic residues; the sequence is RSAKLRIAEKRK.

The protein belongs to the methyltransferase superfamily. RsmH family.

Its subcellular location is the cytoplasm. It catalyses the reaction cytidine(1402) in 16S rRNA + S-adenosyl-L-methionine = N(4)-methylcytidine(1402) in 16S rRNA + S-adenosyl-L-homocysteine + H(+). In terms of biological role, specifically methylates the N4 position of cytidine in position 1402 (C1402) of 16S rRNA. This Bacillus velezensis (strain DSM 23117 / BGSC 10A6 / LMG 26770 / FZB42) (Bacillus amyloliquefaciens subsp. plantarum) protein is Ribosomal RNA small subunit methyltransferase H.